A 288-amino-acid polypeptide reads, in one-letter code: NH(3)-dependent NAD(+) synthetase (288 aa).

46–53 (GISGGQDS) contacts ATP. Asp52 serves as a coordination point for Mg(2+). Deamido-NAD(+) is bound at residue Arg153. Thr173 contacts ATP. Residue Glu178 coordinates Mg(2+). Residues Lys186 and Asp193 each coordinate deamido-NAD(+). ATP-binding residues include Lys202 and Thr224. Deamido-NAD(+) is bound at residue 273-274 (HK).

It belongs to the NAD synthetase family. In terms of assembly, homodimer.

The enzyme catalyses deamido-NAD(+) + NH4(+) + ATP = AMP + diphosphate + NAD(+) + H(+). Its pathway is cofactor biosynthesis; NAD(+) biosynthesis; NAD(+) from deamido-NAD(+) (ammonia route): step 1/1. Catalyzes the ATP-dependent amidation of deamido-NAD to form NAD. Uses ammonia as a nitrogen source. In Deinococcus geothermalis (strain DSM 11300 / CIP 105573 / AG-3a), this protein is NH(3)-dependent NAD(+) synthetase.